We begin with the raw amino-acid sequence, 427 residues long: Enolase (427 aa).

Q163 provides a ligand contact to (2R)-2-phosphoglycerate. The Proton donor role is filled by E205. Mg(2+)-binding residues include D242, E285, and D312. 4 residues coordinate (2R)-2-phosphoglycerate: K337, R366, S367, and K388. Residue K337 is the Proton acceptor of the active site.

It belongs to the enolase family. Mg(2+) is required as a cofactor.

It localises to the cytoplasm. It is found in the secreted. Its subcellular location is the cell surface. It carries out the reaction (2R)-2-phosphoglycerate = phosphoenolpyruvate + H2O. It functions in the pathway carbohydrate degradation; glycolysis; pyruvate from D-glyceraldehyde 3-phosphate: step 4/5. In terms of biological role, catalyzes the reversible conversion of 2-phosphoglycerate (2-PG) into phosphoenolpyruvate (PEP). It is essential for the degradation of carbohydrates via glycolysis. This Thiobacillus denitrificans (strain ATCC 25259 / T1) protein is Enolase.